A 197-amino-acid polypeptide reads, in one-letter code: Probable proteasome subunit beta type-4 (197 aa).

It belongs to the peptidase T1B family. As to quaternary structure, the 26S proteasome consists of a 20S proteasome core and two 19S regulatory subunits. The 20S proteasome core is composed of 28 subunits that are arranged in four stacked rings, resulting in a barrel-shaped structure. The two end rings are each formed by seven alpha subunits, and the two central rings are each formed by seven beta subunits. The catalytic chamber with the active sites is on the inside of the barrel.

The protein resides in the cytoplasm. It is found in the nucleus. In terms of biological role, non-catalytic component of the proteasome which degrades poly-ubiquitinated proteins in the cytoplasm and in the nucleus. It is essential for the regulated turnover of proteins and for the removal of misfolded proteins. The proteasome is a multicatalytic proteinase complex that is characterized by its ability to cleave peptides with Arg, Phe, Tyr, Leu, and Glu adjacent to the leaving group at neutral or slightly basic pH. It has an ATP-dependent proteolytic activity. This is Probable proteasome subunit beta type-4 (PRE1) from Encephalitozoon cuniculi (strain GB-M1) (Microsporidian parasite).